Reading from the N-terminus, the 181-residue chain is MSWGLQILPCLSLILLLWNQVPGLEGQEFRSGSCQVTGVVLPELWEAFWTVKNTVQTQDDITSIRLLKPQVLRNVSGAESCYLAHSLLKFYLNTVFKNYHSKIAKFKVLRSFSTLANNFIVIMSQLQPSKDNSMLPISESAHQRFLLFRRAFKQLDTEVALVKAFGEVDILLTWMQKFYHL.

A signal peptide spans M1–G26. C34 and C81 form a disulfide bridge. A glycan (N-linked (GlcNAc...) asparagine) is linked at N74. K97 participates in a covalent cross-link: Glycyl lysine isopeptide (Lys-Gly) (interchain with G-Cter in ubiquitin).

The protein belongs to the IL-10 family. Post-translationally, glycosylated. In terms of processing, ubiquitination at Lys-97 promotes proteasomal degradation. Selectively expressed by Th2 cells. Expressed in the liver.

It localises to the secreted. Multifunctional cytokine mainly produced by T-cells that plays a regulatory role in immune response, tissue homeostasis, host defense, and oncogenesis. Possesses antiviral functions and induces the type I interferon response during influenza infection. Signals through two receptor complexes IL20RA/IL20RB or IL20RB/IL22RA1. In turn, stimulates the JAK1-STAT3 and MAPK pathways and promotes the secretion of pro-inflammatory mediators including IL8 and MMP1. Intracellularly, maintains endoplasmic reticulum homeostasis by restricting the eIF2alpha-CHOP pathway-mediated stress signal. In addition, acts as a quality control mechanism for the ubiquitin proteasome system by alerting the cell to proteasome dysfunction through activation of PKR/EIF2AK2. This Mus musculus (Mouse) protein is Interleukin-24 (Il24).